The sequence spans 154 residues: Large ribosomal subunit protein uL30 (154 aa).

Residues 114 to 139 form a disordered region; the sequence is PVLRLHPPRGGHRGQKHPTAEGGQIG. Basic residues predominate over residues 119-129; sequence HPPRGGHRGQK.

Belongs to the universal ribosomal protein uL30 family. Part of the 50S ribosomal subunit.

In Haloquadratum walsbyi (strain DSM 16790 / HBSQ001), this protein is Large ribosomal subunit protein uL30.